The sequence spans 171 residues: Shikimate kinase (171 aa).

14–19 (GAGKST) provides a ligand contact to ATP. Serine 18 lines the Mg(2+) pocket. Aspartate 36, arginine 60, and glycine 82 together coordinate substrate. Arginine 120 contributes to the ATP binding site. Arginine 139 serves as a coordination point for substrate. ATP is bound at residue glutamine 156.

This sequence belongs to the shikimate kinase family. In terms of assembly, monomer. Requires Mg(2+) as cofactor.

It is found in the cytoplasm. The catalysed reaction is shikimate + ATP = 3-phosphoshikimate + ADP + H(+). The protein operates within metabolic intermediate biosynthesis; chorismate biosynthesis; chorismate from D-erythrose 4-phosphate and phosphoenolpyruvate: step 5/7. Its function is as follows. Catalyzes the specific phosphorylation of the 3-hydroxyl group of shikimic acid using ATP as a cosubstrate. This chain is Shikimate kinase, found in Shewanella sediminis (strain HAW-EB3).